Here is a 168-residue protein sequence, read N- to C-terminus: Crossover junction endodeoxyribonuclease RuvC (168 aa).

Residues aspartate 9, glutamate 70, and aspartate 145 contribute to the active site. The Mg(2+) site is built by aspartate 9, glutamate 70, and aspartate 145.

This sequence belongs to the RuvC family. As to quaternary structure, homodimer which binds Holliday junction (HJ) DNA. The HJ becomes 2-fold symmetrical on binding to RuvC with unstacked arms; it has a different conformation from HJ DNA in complex with RuvA. In the full resolvosome a probable DNA-RuvA(4)-RuvB(12)-RuvC(2) complex forms which resolves the HJ. The cofactor is Mg(2+).

Its subcellular location is the cytoplasm. It catalyses the reaction Endonucleolytic cleavage at a junction such as a reciprocal single-stranded crossover between two homologous DNA duplexes (Holliday junction).. The RuvA-RuvB-RuvC complex processes Holliday junction (HJ) DNA during genetic recombination and DNA repair. Endonuclease that resolves HJ intermediates. Cleaves cruciform DNA by making single-stranded nicks across the HJ at symmetrical positions within the homologous arms, yielding a 5'-phosphate and a 3'-hydroxyl group; requires a central core of homology in the junction. The consensus cleavage sequence is 5'-(A/T)TT(C/G)-3'. Cleavage occurs on the 3'-side of the TT dinucleotide at the point of strand exchange. HJ branch migration catalyzed by RuvA-RuvB allows RuvC to scan DNA until it finds its consensus sequence, where it cleaves and resolves the cruciform DNA. The chain is Crossover junction endodeoxyribonuclease RuvC from Chlamydia pneumoniae (Chlamydophila pneumoniae).